The sequence spans 230 residues: Potassium/proton antiporter CemA (230 aa).

A run of 4 helical transmembrane segments spans residues 7–27 (LPSL…SSSF), 107–127 (ILHF…FFLG), 145–165 (LNDS…VGFH), and 181–201 (FGWA…PVIL).

It belongs to the CemA family.

The protein localises to the plastid. The protein resides in the chloroplast inner membrane. It catalyses the reaction K(+)(in) + H(+)(out) = K(+)(out) + H(+)(in). Functionally, contributes to K(+)/H(+) antiport activity by supporting proton efflux to control proton extrusion and homeostasis in chloroplasts in a light-dependent manner to modulate photosynthesis. Prevents excessive induction of non-photochemical quenching (NPQ) under continuous-light conditions. Indirectly promotes efficient inorganic carbon uptake into chloroplasts. The chain is Potassium/proton antiporter CemA from Triticum aestivum (Wheat).